The sequence spans 541 residues: Glucose-6-phosphate isomerase (541 aa).

Residue E354 is the Proton donor of the active site. Catalysis depends on residues H385 and K505.

The protein belongs to the GPI family.

It is found in the cytoplasm. The enzyme catalyses alpha-D-glucose 6-phosphate = beta-D-fructose 6-phosphate. It participates in carbohydrate biosynthesis; gluconeogenesis. Its pathway is carbohydrate degradation; glycolysis; D-glyceraldehyde 3-phosphate and glycerone phosphate from D-glucose: step 2/4. Functionally, catalyzes the reversible isomerization of glucose-6-phosphate to fructose-6-phosphate. The chain is Glucose-6-phosphate isomerase from Cupriavidus metallidurans (strain ATCC 43123 / DSM 2839 / NBRC 102507 / CH34) (Ralstonia metallidurans).